Here is a 73-residue protein sequence, read N- to C-terminus: Sec-independent protein translocase protein TatA (73 aa).

A helical transmembrane segment spans residues 1–21 (MGSFSIWHWVIVLVVVVLIFG). The segment at 43-73 (MKSEGEDAAQTPPAAQKEGGRVIDAEPADKK) is disordered. Residues 60–73 (EGGRVIDAEPADKK) are compositionally biased toward basic and acidic residues.

Belongs to the TatA/E family. The Tat system comprises two distinct complexes: a TatABC complex, containing multiple copies of TatA, TatB and TatC subunits, and a separate TatA complex, containing only TatA subunits. Substrates initially bind to the TatABC complex, which probably triggers association of the separate TatA complex to form the active translocon.

It is found in the cell inner membrane. In terms of biological role, part of the twin-arginine translocation (Tat) system that transports large folded proteins containing a characteristic twin-arginine motif in their signal peptide across membranes. TatA could form the protein-conducting channel of the Tat system. This is Sec-independent protein translocase protein TatA from Laribacter hongkongensis (strain HLHK9).